Consider the following 467-residue polypeptide: L-histidine transporter HutT (467 aa).

Transmembrane regions (helical) follow at residues 18 to 38 (FMALGSAIGTGLFYGSASAIQ), 39 to 59 (MAGPAVLLAYLIGGAAVFMVM), 71 to 91 (VAGSFGHYATTYLGPMAGFIL), 99 to 119 (MVIVAIADVTAFGIYMGFWFP), 125 to 145 (IWVLGIVFLIGGLNLCNVKVF), 155 to 175 (LKVGAIVAMILAGLGIMAFGF), 200 to 220 (VGGLIASFAVVMFAFGGIEII), 245 to 265 (ILLFYVLTLFVLMCLYPWPQI), 280 to 300 (GIGSAAAVLNVVVISAAISAI), 334 to 354 (WMTVVVMGAALLIGVLLNYLI), 358 to 378 (VFLLIASIATFATVWVWLMIL), 402 to 422 (FWPYGPAMAIAFMVFIFGVLG), and 429 to 449 (AALIVGVIWVVFLVASYLLWC).

This sequence belongs to the amino acid-polyamine-organocation (APC) superfamily. Amino acid transporter (AAT) (TC 2.A.3.1) family.

The protein resides in the cell inner membrane. The enzyme catalyses L-histidine(out) + n H(+)(out) = L-histidine(in) + n H(+)(in). Transport activity is inhibited by the proton ionophores carbonyl cyanide m-chlorophenyl hydrazine (CCCP) and 2,4-dinitrophenol (DNP), but not by valinomycin, nigericin and nonactin. Uptake is reduced in the presence of the sulfhydryl reagent N-ethylmaleimide (NEM). Uptake is not affected by arginine, lysine, proline or compounds structurally related to histidine such as imidazole, 3-amino-1,2,4-triazole and urocanate. Only 1,2,4-triazolyl-3-alanine reduces the rate of L-histidine uptake significantly. Its function is as follows. Major high-affinity histidine transporter. Binds and catalyzes the uptake of histidine into the cell. Functions as an histidine:proton symporter with high specificity for histidine. The sequence is that of L-histidine transporter HutT from Pseudomonas putida (strain ATCC 47054 / DSM 6125 / CFBP 8728 / NCIMB 11950 / KT2440).